Here is a 264-residue protein sequence, read N- to C-terminus: Stress response regulator protein 1 (264 aa).

Positions 50–74 (IYSDCDNNKNNNDDDDDDDDYNKDT) are disordered. Acidic residues predominate over residues 62–74 (DDDDDDDDYNKDT). The region spanning 138-256 (RFLIVDDNII…LDLIGGSIDD (119 aa)) is the Response regulatory domain. D189 carries the post-translational modification 4-aspartylphosphate.

Its function is as follows. Required for stress adaptation, morphogenesis and virulence. The protein is Stress response regulator protein 1 (SRR1) of Candida tropicalis (strain ATCC MYA-3404 / T1) (Yeast).